A 366-amino-acid polypeptide reads, in one-letter code: Probable protein arginine N-methyltransferase 1.2 (366 aa).

Residues 45 to 347 (ADYYFDSYSH…NPRDVDIKLS (303 aa)) enclose the SAM-dependent MTase PRMT-type domain. Active-site residues include E157 and E166.

It belongs to the class I-like SAM-binding methyltransferase superfamily. Protein arginine N-methyltransferase family. In terms of assembly, interacts with FIB2 and PRMT11.

The protein localises to the nucleus. It localises to the cytoplasm. Functionally, methylates (mono and asymmetric dimethylation) the guanidino nitrogens of arginyl residues present in a glycine and arginine-rich domain. Type I arginine methyltransferase active on both histones and non-histone proteins. Mediates the methylation of MED36A. The polypeptide is Probable protein arginine N-methyltransferase 1.2 (PRMT12) (Arabidopsis thaliana (Mouse-ear cress)).